Reading from the N-terminus, the 439-residue chain is Xylose isomerase (439 aa).

Catalysis depends on residues His-101 and Asp-104. Positions 232, 268, 271, 296, 307, 309, and 339 each coordinate Mg(2+).

It belongs to the xylose isomerase family. In terms of assembly, homotetramer. Mg(2+) is required as a cofactor.

The protein localises to the cytoplasm. It catalyses the reaction alpha-D-xylose = alpha-D-xylulofuranose. This chain is Xylose isomerase, found in Marinomonas sp. (strain MWYL1).